Consider the following 462-residue polypeptide: tRNA-2-methylthio-N(6)-dimethylallyladenosine synthase (462 aa).

An MTTase N-terminal domain is found at 18-138; sequence RKVFVKTYGC…LPNALARVRS (121 aa). Cys27, Cys63, Cys101, Cys179, Cys183, and Cys186 together coordinate [4Fe-4S] cluster. The region spanning 165–397 is the Radical SAM core domain; it reads RKRGVSAFLT…QALLSEQQYA (233 aa). Positions 400-462 constitute a TRAM domain; the sequence is DSMIGREMDV…TNSLIAQKLA (63 aa).

It belongs to the methylthiotransferase family. MiaB subfamily. In terms of assembly, monomer. [4Fe-4S] cluster serves as cofactor.

The protein resides in the cytoplasm. The catalysed reaction is N(6)-dimethylallyladenosine(37) in tRNA + (sulfur carrier)-SH + AH2 + 2 S-adenosyl-L-methionine = 2-methylsulfanyl-N(6)-dimethylallyladenosine(37) in tRNA + (sulfur carrier)-H + 5'-deoxyadenosine + L-methionine + A + S-adenosyl-L-homocysteine + 2 H(+). In terms of biological role, catalyzes the methylthiolation of N6-(dimethylallyl)adenosine (i(6)A), leading to the formation of 2-methylthio-N6-(dimethylallyl)adenosine (ms(2)i(6)A) at position 37 in tRNAs that read codons beginning with uridine. This Brucella anthropi (strain ATCC 49188 / DSM 6882 / CCUG 24695 / JCM 21032 / LMG 3331 / NBRC 15819 / NCTC 12168 / Alc 37) (Ochrobactrum anthropi) protein is tRNA-2-methylthio-N(6)-dimethylallyladenosine synthase.